The following is a 31-amino-acid chain: PTEN upstream open reading frame MP31 (31 aa).

Interacts with lactate dehydrogenases LDHA and LDHB; interaction with mitochondrial LDH leads to inhibition of lactate dehydrogenase activity, preventing conversion of lactate to pyruvate. Expressed in brain (at protein level). Expressed at lower levels in glioblastomas than in normal brain tissue (at protein level).

The protein localises to the mitochondrion. In terms of biological role, inhibits lactate dehydrogenase (LDH)-mediated conversion of lactate to pyruvate in mitochondria by competing with mitochondrial LDH for binding to NAD(+). Also inhibits cellular lactate utilization. This Homo sapiens (Human) protein is PTEN upstream open reading frame MP31.